Here is a 123-residue protein sequence, read N- to C-terminus: Small ribosomal subunit protein uS13 (123 aa).

Residues Gly-95–Lys-123 are disordered. A compositionally biased stretch (basic residues) spans Gln-101–Lys-123.

This sequence belongs to the universal ribosomal protein uS13 family. As to quaternary structure, part of the 30S ribosomal subunit. Forms a loose heterodimer with protein S19. Forms two bridges to the 50S subunit in the 70S ribosome.

Its function is as follows. Located at the top of the head of the 30S subunit, it contacts several helices of the 16S rRNA. In the 70S ribosome it contacts the 23S rRNA (bridge B1a) and protein L5 of the 50S subunit (bridge B1b), connecting the 2 subunits; these bridges are implicated in subunit movement. Contacts the tRNAs in the A and P-sites. The chain is Small ribosomal subunit protein uS13 from Alkaliphilus metalliredigens (strain QYMF).